Here is a 117-residue protein sequence, read N- to C-terminus: Bomanin Bicipital 1 (117 aa).

Positions methionine 1 to alanine 20 are cleaved as a signal peptide. Intrachain disulfides connect cysteine 29–cysteine 32 and cysteine 107–cysteine 110.

This sequence belongs to the bomanin family. In terms of tissue distribution, hemolymph (at protein level).

The protein localises to the secreted. Its function is as follows. Secreted immune-induced peptide induced by Toll signaling. Has a role in resistance to bacterial and fungal infections. The polypeptide is Bomanin Bicipital 1 (Drosophila melanogaster (Fruit fly)).